We begin with the raw amino-acid sequence, 472 residues long: Siroheme synthase (472 aa).

Positions 1-207 (MNFLPIFLDI…GKDQAAKAWL (207 aa)) are precorrin-2 dehydrogenase /sirohydrochlorin ferrochelatase. Residues 22-23 (EV) and 43-44 (PR) contribute to the NAD(+) site. Position 132 is a phosphoserine (Ser-132). The segment at 221 to 472 (GEVYLVGAGP…QPEGNLPGAE (252 aa)) is uroporphyrinogen-III C-methyltransferase. Pro-230 is an S-adenosyl-L-methionine binding site. Asp-253 acts as the Proton acceptor in catalysis. The active-site Proton donor is Lys-275. S-adenosyl-L-methionine contacts are provided by residues 306-308 (GGD), Ile-311, 336-337 (TA), Met-388, and Gly-417.

It in the N-terminal section; belongs to the precorrin-2 dehydrogenase / sirohydrochlorin ferrochelatase family. The protein in the C-terminal section; belongs to the precorrin methyltransferase family.

The enzyme catalyses uroporphyrinogen III + 2 S-adenosyl-L-methionine = precorrin-2 + 2 S-adenosyl-L-homocysteine + H(+). It carries out the reaction precorrin-2 + NAD(+) = sirohydrochlorin + NADH + 2 H(+). It catalyses the reaction siroheme + 2 H(+) = sirohydrochlorin + Fe(2+). Its pathway is cofactor biosynthesis; adenosylcobalamin biosynthesis; precorrin-2 from uroporphyrinogen III: step 1/1. It participates in cofactor biosynthesis; adenosylcobalamin biosynthesis; sirohydrochlorin from precorrin-2: step 1/1. The protein operates within porphyrin-containing compound metabolism; siroheme biosynthesis; precorrin-2 from uroporphyrinogen III: step 1/1. It functions in the pathway porphyrin-containing compound metabolism; siroheme biosynthesis; siroheme from sirohydrochlorin: step 1/1. Its pathway is porphyrin-containing compound metabolism; siroheme biosynthesis; sirohydrochlorin from precorrin-2: step 1/1. Multifunctional enzyme that catalyzes the SAM-dependent methylations of uroporphyrinogen III at position C-2 and C-7 to form precorrin-2 via precorrin-1. Then it catalyzes the NAD-dependent ring dehydrogenation of precorrin-2 to yield sirohydrochlorin. Finally, it catalyzes the ferrochelation of sirohydrochlorin to yield siroheme. The chain is Siroheme synthase from Nitrosospira multiformis (strain ATCC 25196 / NCIMB 11849 / C 71).